A 110-amino-acid polypeptide reads, in one-letter code: Large ribosomal subunit protein uL22 (110 aa).

Belongs to the universal ribosomal protein uL22 family. As to quaternary structure, part of the 50S ribosomal subunit.

Functionally, this protein binds specifically to 23S rRNA; its binding is stimulated by other ribosomal proteins, e.g. L4, L17, and L20. It is important during the early stages of 50S assembly. It makes multiple contacts with different domains of the 23S rRNA in the assembled 50S subunit and ribosome. Its function is as follows. The globular domain of the protein is located near the polypeptide exit tunnel on the outside of the subunit, while an extended beta-hairpin is found that lines the wall of the exit tunnel in the center of the 70S ribosome. This is Large ribosomal subunit protein uL22 from Campylobacter fetus subsp. fetus (strain 82-40).